Here is a 603-residue protein sequence, read N- to C-terminus: O-acetyltransferase OatA (603 aa).

The next 11 membrane-spanning stretches (helical) occupy residues 17–37 (YLPG…IYHL), 45–65 (GFLG…SLLI), 87–107 (LIPA…IFKP), 148–168 (LWSL…ITFL), 177–197 (IIQT…VIHF), 211–231 (TRLQ…PFAL), 239–259 (IVVS…TLFF), 268–288 (IYNG…AIAV), 311–331 (YSLY…YVQG), 333–353 (IPVY…EISY), and 382–402 (VLVI…FDAL). Residues Ser-453, Asp-575, and His-578 contribute to the active site.

The protein belongs to the acyltransferase 3 family. As to quaternary structure, monomer.

It is found in the cell membrane. Its function is as follows. Responsible for O-acetylation at the C(6)-hydroxyl group of N-acetylmuramyl residues, forming the corresponding N,6-O-diacetylmuramic acid of the peptidoglycan. O-acetylation of the peptidoglycan is the major determinant for lysozyme resistance. The chain is O-acetyltransferase OatA from Staphylococcus aureus (strain NCTC 8325 / PS 47).